The sequence spans 285 residues: Aquaporin-6 (285 aa).

Transmembrane regions (helical) follow at residues 36–56 (IFWK…VFSC), 76–96 (YCFK…ALLL), and 105–125 (ISLV…CYYG). The NPA 1 signature appears at 86 to 88 (NPV). A glycan (N-linked (GlcNAc...) asparagine) is linked at asparagine 128. 2 helical membrane-spanning segments follow: residues 143–163 (VSPA…ILTM) and 177–197 (GDSN…SGMA). The short motif at 206 to 208 (NPM) is the NPA 2 element. The chain crosses the membrane as a helical span at residues 225-245 (YIYWIGPIFGCLLAVFTFDYT).

This sequence belongs to the MIP/aquaporin (TC 1.A.8) family.

It is found in the cell membrane. Functionally, probable water-specific aquaporin that may modulate the water content and osmolytes during anhydrobiosis. This Milnesium tardigradum (Water bear) protein is Aquaporin-6.